The following is a 63-amino-acid chain: Large ribosomal subunit protein eL24 (63 aa).

Residues cysteine 7, cysteine 10, cysteine 33, and cysteine 37 each coordinate Zn(2+). The C4-type zinc finger occupies 7-37; the sequence is CSFCGGSIEPGTGLMYVLRNGQILWFCSSKC.

Belongs to the eukaryotic ribosomal protein eL24 family. As to quaternary structure, part of the 50S ribosomal subunit. Forms a cluster with proteins L3 and L14. Zn(2+) serves as cofactor.

In terms of biological role, binds to the 23S rRNA. The sequence is that of Large ribosomal subunit protein eL24 from Aeropyrum pernix (strain ATCC 700893 / DSM 11879 / JCM 9820 / NBRC 100138 / K1).